The primary structure comprises 145 residues: 3-hydroxyacyl-[acyl-carrier-protein] dehydratase FabZ (145 aa).

H49 is a catalytic residue.

This sequence belongs to the thioester dehydratase family. FabZ subfamily.

It is found in the cytoplasm. The enzyme catalyses a (3R)-hydroxyacyl-[ACP] = a (2E)-enoyl-[ACP] + H2O. Involved in unsaturated fatty acids biosynthesis. Catalyzes the dehydration of short chain beta-hydroxyacyl-ACPs and long chain saturated and unsaturated beta-hydroxyacyl-ACPs. The protein is 3-hydroxyacyl-[acyl-carrier-protein] dehydratase FabZ of Rickettsia massiliae (strain Mtu5).